A 95-amino-acid chain; its full sequence is Co-chaperonin GroES (95 aa).

The protein belongs to the GroES chaperonin family. As to quaternary structure, heptamer of 7 subunits arranged in a ring. Interacts with the chaperonin GroEL.

Its subcellular location is the cytoplasm. Functionally, together with the chaperonin GroEL, plays an essential role in assisting protein folding. The GroEL-GroES system forms a nano-cage that allows encapsulation of the non-native substrate proteins and provides a physical environment optimized to promote and accelerate protein folding. GroES binds to the apical surface of the GroEL ring, thereby capping the opening of the GroEL channel. This chain is Co-chaperonin GroES, found in Francisella philomiragia subsp. philomiragia (strain ATCC 25017 / CCUG 19701 / FSC 153 / O#319-036).